Here is a 349-residue protein sequence, read N- to C-terminus: Protein-glutamate methylesterase/protein-glutamine glutaminase 2 (349 aa).

One can recognise a Response regulatory domain in the interval 4-121 (SVLVVDDSAL…AEGMQAYAEE (118 aa)). A 4-aspartylphosphate modification is found at D55. The 193-residue stretch at 151–343 (LLSTEKIIAL…AALLQQAARR (193 aa)) folds into the CheB-type methylesterase domain. Active-site residues include S163, H189, and D285.

It belongs to the CheB family. Interacts with the C-terminal pentapeptide GWEEF of McpB. In terms of processing, phosphorylated by CheA. Phosphorylation of the N-terminal regulatory domain activates the methylesterase activity.

Its subcellular location is the cytoplasm. The enzyme catalyses [protein]-L-glutamate 5-O-methyl ester + H2O = L-glutamyl-[protein] + methanol + H(+). The catalysed reaction is L-glutaminyl-[protein] + H2O = L-glutamyl-[protein] + NH4(+). Functionally, involved in chemotaxis. Part of a chemotaxis signal transduction system that modulates chemotaxis in response to various stimuli. Catalyzes the demethylation of specific methylglutamate residues introduced into the chemoreceptors (methyl-accepting chemotaxis proteins or MCP) by CheR. Also mediates the irreversible deamidation of specific glutamine residues to glutamic acid. Acts on the methyl-accepting chemotaxis protein McpB. May be involved in a specific chemotactic response, which takes place during infection and is required for P.aeruginosa pathogenicity. The protein is Protein-glutamate methylesterase/protein-glutamine glutaminase 2 of Pseudomonas aeruginosa (strain ATCC 15692 / DSM 22644 / CIP 104116 / JCM 14847 / LMG 12228 / 1C / PRS 101 / PAO1).